A 514-amino-acid polypeptide reads, in one-letter code: Membrane-bound lytic murein transglycosylase F (514 aa).

The first 30 residues, 1–30 (MKKLKINYLFIGILTLLLAAALWPSIPWFG), serve as a signal peptide directing secretion. The tract at residues 31–269 (KTENHVAAIQ…RIEEKYLGHG (239 aa)) is non-LT domain. Residues 270–514 (DDFDYVDTRS…LFTPQKKEEK (245 aa)) are LT domain. Residue E314 is part of the active site.

In the N-terminal section; belongs to the bacterial solute-binding protein 3 family. The protein in the C-terminal section; belongs to the transglycosylase Slt family.

It localises to the cell outer membrane. The enzyme catalyses Exolytic cleavage of the (1-&gt;4)-beta-glycosidic linkage between N-acetylmuramic acid (MurNAc) and N-acetylglucosamine (GlcNAc) residues in peptidoglycan, from either the reducing or the non-reducing ends of the peptidoglycan chains, with concomitant formation of a 1,6-anhydrobond in the MurNAc residue.. Functionally, murein-degrading enzyme that degrades murein glycan strands and insoluble, high-molecular weight murein sacculi, with the concomitant formation of a 1,6-anhydromuramoyl product. Lytic transglycosylases (LTs) play an integral role in the metabolism of the peptidoglycan (PG) sacculus. Their lytic action creates space within the PG sacculus to allow for its expansion as well as for the insertion of various structures such as secretion systems and flagella. The sequence is that of Membrane-bound lytic murein transglycosylase F from Salmonella arizonae (strain ATCC BAA-731 / CDC346-86 / RSK2980).